A 406-amino-acid polypeptide reads, in one-letter code: Purine nucleoside permease (406 aa).

The signal sequence occupies residues 1-22 (MKLSTLFTLATTISTLTTFTIA).

The protein belongs to the NUP family.

With respect to regulation, mammalian nucleoside transport inhibitors dipyridamole and NBMPR inhibit adenosine transport by NUP. Functionally, nucleoside permease that transports adenosine and guanosine. Does not show any transport activities towards cytidine, adenine, guanine, uridine, and uracil. This is Purine nucleoside permease from Candida albicans (Yeast).